The following is a 121-amino-acid chain: Small ribosomal subunit protein uS13 (121 aa).

The segment at 91 to 121 (HRRGLPVRGQKTKNNARTRKGPVKTVANKKK) is disordered.

This sequence belongs to the universal ribosomal protein uS13 family. Part of the 30S ribosomal subunit. Forms a loose heterodimer with protein S19. Forms two bridges to the 50S subunit in the 70S ribosome.

Its function is as follows. Located at the top of the head of the 30S subunit, it contacts several helices of the 16S rRNA. In the 70S ribosome it contacts the 23S rRNA (bridge B1a) and protein L5 of the 50S subunit (bridge B1b), connecting the 2 subunits; these bridges are implicated in subunit movement. Contacts the tRNAs in the A and P-sites. This Staphylococcus saprophyticus subsp. saprophyticus (strain ATCC 15305 / DSM 20229 / NCIMB 8711 / NCTC 7292 / S-41) protein is Small ribosomal subunit protein uS13.